We begin with the raw amino-acid sequence, 127 residues long: Flagellar hook-basal body complex protein FliE (127 aa).

Belongs to the FliE family.

Its subcellular location is the bacterial flagellum basal body. This is Flagellar hook-basal body complex protein FliE from Leptospira interrogans serogroup Icterohaemorrhagiae serovar copenhageni (strain Fiocruz L1-130).